A 297-amino-acid polypeptide reads, in one-letter code: MFRPATRILLRAPGVAARGPVSRRLISTAPPDAKSRSWKSTIVRLGLAAGAVYYYNTSSVFAEQPSLSFLSKQSTPDSSDETQLPTIDSIKPRIREERQAESKAVSQPDAQPTQHEALSASEAALKSPQELEDEAGQEAAFNPETGEINWDCPCLGGMAHGPCGEEFKAAFSCFVYSTEEPKGMDCIDKFKGMQECFRRYPDVYGAELEDDDEADAAAATAAGVSEPSEQPASPTVSAPTAEIDASSDSEGKEGRAKDVHAQVKSEVAEKAEQAESDDLVPKAWHDTEGTKAQQTEK.

The transit peptide at methionine 1–leucine 25 directs the protein to the mitochondrion. At isoleucine 26 to arginine 44 the chain is on the mitochondrial matrix side. Residues leucine 45–alanine 62 form a helical; Signal-anchor for type II membrane protein membrane-spanning segment. Residues glutamate 63–lysine 297 are Mitochondrial intermembrane-facing. Positions leucine 70–threonine 86 are enriched in polar residues. The interval leucine 70 to glutamine 137 is disordered. A compositionally biased stretch (basic and acidic residues) spans isoleucine 90–glutamate 101. Polar residues predominate over residues alanine 104–glutamine 114. The segment covering glutamate 116–leucine 125 has biased composition (low complexity). Disulfide bonds link cysteine 152/cysteine 154, cysteine 163/cysteine 196, and cysteine 173/cysteine 186. Residues histidine 160–tyrosine 204 enclose the CHCH domain. 2 short sequence motifs (cx9C motif) span residues cysteine 163 to cysteine 173 and cysteine 186 to cysteine 196. A disordered region spans residues leucine 208–lysine 297. Polar residues predominate over residues proline 227–alanine 238. The segment covering serine 249–lysine 297 has biased composition (basic and acidic residues).

As to quaternary structure, monomer. It depends on Cu(2+) as a cofactor. The cofactor is Zn(2+).

The protein localises to the mitochondrion inner membrane. In terms of biological role, required for the import and folding of small cysteine-containing proteins (small Tim) in the mitochondrial intermembrane space (IMS). Forms a redox cycle with ERV1 that involves a disulfide relay system. Precursor proteins to be imported into the IMS are translocated in their reduced form into the mitochondria. The oxidized form of MIA40 forms a transient intermolecular disulfide bridge with the reduced precursor protein, resulting in oxidation of the precursor protein that now contains an intramolecular disulfide bond and is able to undergo folding in the IMS. This is Mitochondrial intermembrane space import and assembly protein 40 (mia40) from Aspergillus fumigatus (strain ATCC MYA-4609 / CBS 101355 / FGSC A1100 / Af293) (Neosartorya fumigata).